The primary structure comprises 156 residues: Transcriptional repressor NrdR (156 aa).

A zinc finger spans residues 3 to 34 (CPFCQHDDTQVLDTRISEEGDSIRRRRRCVSC). Residues 49 to 139 (PVIVKKNGSR…VYKSFEDVAE (91 aa)) enclose the ATP-cone domain.

This sequence belongs to the NrdR family. It depends on Zn(2+) as a cofactor.

Functionally, negatively regulates transcription of bacterial ribonucleotide reductase nrd genes and operons by binding to NrdR-boxes. In Herminiimonas arsenicoxydans, this protein is Transcriptional repressor NrdR.